Here is a 204-residue protein sequence, read N- to C-terminus: Putative AgrB-like protein (204 aa).

A run of 4 helical transmembrane segments spans residues 52-74 (YGIA…YLWL), 87-107 (LNCT…FQNI), 111-131 (NWIV…FAPA), and 156-176 (LILT…LIMV).

The protein belongs to the AgrB family.

It is found in the cell membrane. In terms of biological role, may be involved in the proteolytic processing of a quorum sensing system signal molecule precursor. The protein is Putative AgrB-like protein of Listeria monocytogenes serotype 4b (strain CLIP80459).